The sequence spans 310 residues: Delta(1)-pyrroline-2-carboxylate reductase 1 (310 aa).

Belongs to the ornithine cyclodeaminase/mu-crystallin family.

The enzyme catalyses L-proline + NAD(+) = 1-pyrroline-2-carboxylate + NADH + H(+). The catalysed reaction is L-proline + NADP(+) = 1-pyrroline-2-carboxylate + NADPH + H(+). Functionally, catalyzes the reduction of Delta(1)-pyrroline-2-carboxylate (Pyr2C) to L-proline, using NADPH as the electron donor. May be involved in a degradation pathway that converts trans-3-hydroxy-L-proline (t3LHyp) to L-proline. This Burkholderia multivorans (strain ATCC 17616 / 249) protein is Delta(1)-pyrroline-2-carboxylate reductase 1.